Consider the following 116-residue polypeptide: Large ribosomal subunit protein uL18 (116 aa).

This sequence belongs to the universal ribosomal protein uL18 family. Part of the 50S ribosomal subunit; part of the 5S rRNA/L5/L18/L25 subcomplex. Contacts the 5S and 23S rRNAs.

Functionally, this is one of the proteins that bind and probably mediate the attachment of the 5S RNA into the large ribosomal subunit, where it forms part of the central protuberance. The sequence is that of Large ribosomal subunit protein uL18 from Pseudomonas entomophila (strain L48).